A 139-amino-acid chain; its full sequence is Ribosome maturation factor RimP (139 aa).

The protein belongs to the RimP family.

Its subcellular location is the cytoplasm. Its function is as follows. Required for maturation of 30S ribosomal subunits. This chain is Ribosome maturation factor RimP, found in Syntrophomonas wolfei subsp. wolfei (strain DSM 2245B / Goettingen).